The sequence spans 312 residues: Putative clathrin assembly protein At2g01920 (312 aa).

An ENTH domain is found at 21–152 (LITATDEKFT…ILYYNKNMIR (132 aa)).

The protein localises to the membrane. It localises to the clathrin-coated pit. The protein resides in the golgi apparatus. Its subcellular location is the cytoplasmic vesicle. It is found in the clathrin-coated vesicle. This Arabidopsis thaliana (Mouse-ear cress) protein is Putative clathrin assembly protein At2g01920.